The primary structure comprises 608 residues: Phosphomethylpyrimidine synthase (608 aa).

Substrate is bound by residues Asn-216, Met-245, Tyr-274, His-310, 330–332 (SRG), 371–374 (DGLR), and Glu-410. His-414 lines the Zn(2+) pocket. A substrate-binding site is contributed by Tyr-437. His-478 is a Zn(2+) binding site. [4Fe-4S] cluster is bound by residues Cys-558, Cys-561, and Cys-566.

This sequence belongs to the ThiC family. Homodimer. The cofactor is [4Fe-4S] cluster.

The enzyme catalyses 5-amino-1-(5-phospho-beta-D-ribosyl)imidazole + S-adenosyl-L-methionine = 4-amino-2-methyl-5-(phosphooxymethyl)pyrimidine + CO + 5'-deoxyadenosine + formate + L-methionine + 3 H(+). It functions in the pathway cofactor biosynthesis; thiamine diphosphate biosynthesis. Catalyzes the synthesis of the hydroxymethylpyrimidine phosphate (HMP-P) moiety of thiamine from aminoimidazole ribotide (AIR) in a radical S-adenosyl-L-methionine (SAM)-dependent reaction. The chain is Phosphomethylpyrimidine synthase from Ruegeria sp. (strain TM1040) (Silicibacter sp.).